Consider the following 476-residue polypeptide: Protein transport protein Sec61 subunit alpha isoform 2 (476 aa).

Over 1-32 the chain is Cytoplasmic; the sequence is MGIKFLEVIKPFCAVLPEIQKPERKIQFREKV. The helical transmembrane segment at 33-53 threads the bilayer; sequence LWTAITLFIFLVCCQIPLFGI. The Lumenal portion of the chain corresponds to 54-75; that stretch reads MSSDSADPFYWMRVILASNRGT. A helical transmembrane segment spans residues 76–96; it reads LMELGISPIVTSGLIMQLLAG. Residues 97 to 117 lie on the Cytoplasmic side of the membrane; that stretch reads AKIIEVGDTPKDRALFNGAQK. A helical membrane pass occupies residues 118 to 138; sequence LFGMIITIGQAIVYVMTGMYG. Residues 139–144 lie on the Lumenal side of the membrane; that stretch reads DPAEMG. The helical transmembrane segment at 145-165 threads the bilayer; it reads AGICLLIIIQLFVAGLIVLLL. Over 166 to 172 the chain is Cytoplasmic; sequence DELLQKG. Residues 173-193 form a helical membrane-spanning segment; that stretch reads YGLGSGISLFIATNICETIVW. Over 194 to 240 the chain is Lumenal; that stretch reads KASSPTTINTGRGTEFEGAVIALFHLLATRTDKVRALREAFYRQNLP. The helical transmembrane segment at 241-261 threads the bilayer; it reads NLMNLIATVFVFAVVIYFQGF. Residues 262-288 lie on the Cytoplasmic side of the membrane; sequence RVDLPIKSARYRGQYSSYPIKLFYTSN. Residues 289-309 traverse the membrane as a helical segment; that stretch reads IPIILQSALVSNLYVISQMLS. Residues 310-353 are Lumenal-facing; that stretch reads VRFSGNFLVNLLGQWADVSGGGPARSYPVGGLCYYLSPPESMGA. Residues 354–374 traverse the membrane as a helical segment; it reads ILEDPVHVVVYIIFMLGSCAF. The Cytoplasmic portion of the chain corresponds to 375–420; it reads FSKTWIEVSGSSAKDVAKQLKEQQMVMRGHRDTSMVHELNRYIPTA. 2 consecutive transmembrane segments (helical) span residues 421–441 and 442–462; these read AAFG…LGAI and GSGT…EIFV. The Cytoplasmic segment spans residues 463 to 476; that stretch reads KEQAEVGGMGALFF.

This sequence belongs to the SecY/SEC61-alpha family. In terms of assembly, the SEC61 channel-forming translocon complex consists of channel-forming core components SEC61A1, SEC61B and SEC61G and different auxiliary components such as SEC62 and SEC63.

Its subcellular location is the endoplasmic reticulum membrane. Its function is as follows. Component of SEC61 channel-forming translocon complex that mediates transport of signal peptide-containing precursor polypeptides across the endoplasmic reticulum (ER). Forms a ribosome receptor and a gated pore in the ER membrane, both functions required for cotranslational translocation of nascent polypeptides. The protein is Protein transport protein Sec61 subunit alpha isoform 2 (SEC61A2) of Pongo abelii (Sumatran orangutan).